We begin with the raw amino-acid sequence, 471 residues long: ATP synthase subunit beta, chloroplastic (471 aa).

An ATP-binding site is contributed by G151–T158.

This sequence belongs to the ATPase alpha/beta chains family. In terms of assembly, F-type ATPases have 2 components, CF(1) - the catalytic core - and CF(0) - the membrane proton channel. CF(1) has five subunits: alpha(3), beta(3), gamma(1), delta(1), epsilon(1). CF(0) has four main subunits: a(1), b(1), b'(1) and c(9-12).

Its subcellular location is the plastid. It localises to the chloroplast thylakoid membrane. It catalyses the reaction ATP + H2O + 4 H(+)(in) = ADP + phosphate + 5 H(+)(out). Its function is as follows. Produces ATP from ADP in the presence of a proton gradient across the membrane. The catalytic sites are hosted primarily by the beta subunits. In Rhodomonas salina (Cryptomonas salina), this protein is ATP synthase subunit beta, chloroplastic.